The following is a 166-amino-acid chain: Xanthine-guanine phosphoribosyltransferase (166 aa).

5-phospho-alpha-D-ribose 1-diphosphate is bound by residues 42–43 (RG) and 99–107 (DDLTDTGKT). A Mg(2+)-binding site is contributed by Asp100. Positions 103 and 146 each coordinate guanine. The xanthine site is built by Asp103 and Ile146. Residues 103-107 (DTGKT) and 145-146 (WI) each bind GMP.

It belongs to the purine/pyrimidine phosphoribosyltransferase family. XGPT subfamily. As to quaternary structure, homotetramer. It depends on Mg(2+) as a cofactor.

Its subcellular location is the cell inner membrane. The enzyme catalyses GMP + diphosphate = guanine + 5-phospho-alpha-D-ribose 1-diphosphate. It carries out the reaction XMP + diphosphate = xanthine + 5-phospho-alpha-D-ribose 1-diphosphate. It catalyses the reaction IMP + diphosphate = hypoxanthine + 5-phospho-alpha-D-ribose 1-diphosphate. It participates in purine metabolism; GMP biosynthesis via salvage pathway; GMP from guanine: step 1/1. Its pathway is purine metabolism; XMP biosynthesis via salvage pathway; XMP from xanthine: step 1/1. Its function is as follows. Purine salvage pathway enzyme that catalyzes the transfer of the ribosyl-5-phosphate group from 5-phospho-alpha-D-ribose 1-diphosphate (PRPP) to the N9 position of the 6-oxopurines guanine and xanthine to form the corresponding ribonucleotides GMP (guanosine 5'-monophosphate) and XMP (xanthosine 5'-monophosphate), with the release of PPi. To a lesser extent, also acts on hypoxanthine. The polypeptide is Xanthine-guanine phosphoribosyltransferase (Mesorhizobium japonicum (strain LMG 29417 / CECT 9101 / MAFF 303099) (Mesorhizobium loti (strain MAFF 303099))).